Here is a 346-residue protein sequence, read N- to C-terminus: Methylthioribose-1-phosphate isomerase (346 aa).

Residues 46–48, R89, and Q196 each bind substrate; that span reads RGA. Catalysis depends on D237, which acts as the Proton donor. Residue 247-248 coordinates substrate; sequence NK.

This sequence belongs to the eIF-2B alpha/beta/delta subunits family. MtnA subfamily.

It carries out the reaction 5-(methylsulfanyl)-alpha-D-ribose 1-phosphate = 5-(methylsulfanyl)-D-ribulose 1-phosphate. It participates in amino-acid biosynthesis; L-methionine biosynthesis via salvage pathway; L-methionine from S-methyl-5-thio-alpha-D-ribose 1-phosphate: step 1/6. Catalyzes the interconversion of methylthioribose-1-phosphate (MTR-1-P) into methylthioribulose-1-phosphate (MTRu-1-P). This Citrifermentans bemidjiense (strain ATCC BAA-1014 / DSM 16622 / JCM 12645 / Bem) (Geobacter bemidjiensis) protein is Methylthioribose-1-phosphate isomerase.